A 175-amino-acid polypeptide reads, in one-letter code: NADH-quinone oxidoreductase subunit B (175 aa).

Cys54, Cys55, Cys119, and Cys149 together coordinate [4Fe-4S] cluster.

Belongs to the complex I 20 kDa subunit family. NDH-1 is composed of at least 14 different subunits, Nqo1 to Nqo14. The complex has a L-shaped structure, with the hydrophobic arm (subunits Nqo7, Nqo8, Nqo10 to Nqo14) embedded in the inner membrane and the hydrophilic peripheral arm (subunits Nqo1 to Nqo6, Nqo9) protruding into the bacterial cytoplasm. The hydrophilic domain contains all the redox centers. NADH-quinone oxidoreductase forms a supercomplex with ubiquinol-cytochrome c reductase complex (complex III or cytochrome b-c1 complex) and cytochrome c oxidase (complex IV), which stabilizes the NADH-quinone oxidoreductase complex. The cofactor is [4Fe-4S] cluster.

The protein localises to the cell inner membrane. It carries out the reaction a quinone + NADH + 5 H(+)(in) = a quinol + NAD(+) + 4 H(+)(out). NDH-1 shuttles electrons from NADH, via FMN and iron-sulfur (Fe-S) centers, to quinones in the respiratory chain. The immediate electron acceptor for the enzyme in this species is believed to be ubiquinone. Couples the redox reaction to proton translocation (for every two electrons transferred, four hydrogen ions are translocated across the cytoplasmic membrane), and thus conserves the redox energy in a proton gradient. In Paracoccus denitrificans (strain Pd 1222), this protein is NADH-quinone oxidoreductase subunit B.